Consider the following 65-residue polypeptide: Hainantoxin-X (65 aa).

Positions 1–20 (MNMKILVLVAVLCLVVSTHA) are cleaved as a signal peptide. A propeptide spanning residues 21–37 (ERHSKTDMEDSPMIQER) is cleaved from the precursor. 3 disulfides stabilise this stretch: Cys39–Cys56, Cys46–Cys59, and Cys55–Cys64.

It belongs to the neurotoxin 36 family. 02 subfamily. Expressed by the venom gland.

The protein localises to the secreted. Reversibly blocks N-type calcium channels (Cav2.2/CACNA1B) in rat dorsal root ganglion cells. Elicits no toxic symptoms in either vertebrates or invertebrates during a period of 48 hours post-injection, when it was assayed in vivo by direct injection into mice and cockroaches. This Cyriopagopus hainanus (Chinese bird spider) protein is Hainantoxin-X.